Reading from the N-terminus, the 340-residue chain is Protein AC11 (340 aa).

Functionally, plays an essential role in nucleocapsid egress from the host nucleus to form the budded virion (BV). Does not participate in nucleocapsid formation. This chain is Protein AC11, found in Autographa californica nuclear polyhedrosis virus (AcMNPV).